The sequence spans 186 residues: Large ribosomal subunit protein eL18 (186 aa).

The protein belongs to the eukaryotic ribosomal protein eL18 family. In terms of assembly, component of the large ribosomal subunit. Mature ribosomes consist of a small (40S) and a large (60S) subunit. The 40S subunit contains about 32 different proteins and 1 molecule of RNA (18S). The 60S subunit contains 45 different proteins and 3 molecules of RNA (25S, 5.8S and 5S).

It localises to the cytoplasm. Component of the ribosome, a large ribonucleoprotein complex responsible for the synthesis of proteins in the cell. The small ribosomal subunit (SSU) binds messenger RNAs (mRNAs) and translates the encoded message by selecting cognate aminoacyl-transfer RNA (tRNA) molecules. The large subunit (LSU) contains the ribosomal catalytic site termed the peptidyl transferase center (PTC), which catalyzes the formation of peptide bonds, thereby polymerizing the amino acids delivered by tRNAs into a polypeptide chain. The nascent polypeptides leave the ribosome through a tunnel in the LSU and interact with protein factors that function in enzymatic processing, targeting, and the membrane insertion of nascent chains at the exit of the ribosomal tunnel. The sequence is that of Large ribosomal subunit protein eL18 from Candida albicans (strain SC5314 / ATCC MYA-2876) (Yeast).